Consider the following 359-residue polypeptide: Probable dual-specificity RNA methyltransferase RlmN (359 aa).

The active-site Proton acceptor is the Glu91. The Radical SAM core domain maps to 97–329 (QHYGHSVCVT…KKNGVNCVVR (233 aa)). Cys104 and Cys340 are joined by a disulfide. 3 residues coordinate [4Fe-4S] cluster: Cys111, Cys115, and Cys118. S-adenosyl-L-methionine contacts are provided by residues 163–164 (GE), Ser195, 218–220 (SLH), and Asn296. Cys340 acts as the S-methylcysteine intermediate in catalysis.

This sequence belongs to the radical SAM superfamily. RlmN family. Requires [4Fe-4S] cluster as cofactor.

It is found in the cytoplasm. It carries out the reaction adenosine(2503) in 23S rRNA + 2 reduced [2Fe-2S]-[ferredoxin] + 2 S-adenosyl-L-methionine = 2-methyladenosine(2503) in 23S rRNA + 5'-deoxyadenosine + L-methionine + 2 oxidized [2Fe-2S]-[ferredoxin] + S-adenosyl-L-homocysteine. It catalyses the reaction adenosine(37) in tRNA + 2 reduced [2Fe-2S]-[ferredoxin] + 2 S-adenosyl-L-methionine = 2-methyladenosine(37) in tRNA + 5'-deoxyadenosine + L-methionine + 2 oxidized [2Fe-2S]-[ferredoxin] + S-adenosyl-L-homocysteine. Its function is as follows. Specifically methylates position 2 of adenine 2503 in 23S rRNA and position 2 of adenine 37 in tRNAs. This chain is Probable dual-specificity RNA methyltransferase RlmN, found in Streptococcus pyogenes serotype M18 (strain MGAS8232).